The chain runs to 326 residues: MEMO1 family protein TTHA0924 (326 aa).

Belongs to the MEMO1 family.

The protein is MEMO1 family protein TTHA0924 of Thermus thermophilus (strain ATCC 27634 / DSM 579 / HB8).